The following is a 1556-amino-acid chain: Ferredoxin-dependent glutamate synthase 2 (1556 aa).

Residue cysteine 37 is the For GATase activity of the active site. The region spanning 37–431 (CGVGFIANLR…PGQMIAVDLA (395 aa)) is the Glutamine amidotransferase type-2 domain. [3Fe-4S] cluster is bound by residues cysteine 1173, cysteine 1179, and cysteine 1184. Residues 1533–1556 (PSEKDSPEANGDVSLTGEKTLTSV) form a disordered region.

It belongs to the glutamate synthase family. Requires [3Fe-4S] cluster as cofactor. FAD serves as cofactor. It depends on FMN as a cofactor.

The enzyme catalyses 2 oxidized [2Fe-2S]-[ferredoxin] + 2 L-glutamate = L-glutamine + 2 reduced [2Fe-2S]-[ferredoxin] + 2-oxoglutarate + 2 H(+). Its pathway is amino-acid biosynthesis; L-glutamate biosynthesis via GLT pathway; L-glutamate from 2-oxoglutarate and L-glutamine (ferredoxin route): step 1/1. It participates in energy metabolism; nitrogen metabolism. This chain is Ferredoxin-dependent glutamate synthase 2 (gltS), found in Synechocystis sp. (strain ATCC 27184 / PCC 6803 / Kazusa).